A 202-amino-acid chain; its full sequence is Protease (202 aa).

Active-site residues include histidine 55, aspartate 72, and cysteine 122.

This sequence belongs to the peptidase C5 family. As to quaternary structure, interacts with protease cofactor pVI-C; this interaction is necessary for protease activation.

The protein localises to the virion. Its subcellular location is the host nucleus. It catalyses the reaction Cleaves proteins of the adenovirus and its host cell at two consensus sites: -Yaa-Xaa-Gly-Gly-|-Xaa- and -Yaa-Xaa-Gly-Xaa-|-Gly- (in which Yaa is Met, Ile or Leu, and Xaa is any amino acid).. With respect to regulation, requires DNA and protease cofactor for maximal activation. Inside nascent virions, becomes partially activated by binding to the viral DNA, allowing it to cleave the cofactor that binds to the protease and fully activates it. Actin, like the viral protease cofactor, seems to act as a cofactor in the cleavage of cytokeratin 18 and of actin itself. Cleaves viral precursor proteins (pTP, pIIIa, pVI, pVII, pVIII, and pX) inside newly assembled particles giving rise to mature virions. Protease complexed to its cofactor slides along the viral DNA to specifically locate and cleave the viral precursors. Mature virions have a weakened organization compared to the unmature virions, thereby facilitating subsequent uncoating. Without maturation, the particle lacks infectivity and is unable to uncoat. Late in adenovirus infection, in the cytoplasm, may participate in the cytoskeleton destruction. Cleaves host cell cytoskeletal keratins K7 and K18. The protein is Protease of Bovine adenovirus 7 (BAdV-7).